Here is a 266-residue protein sequence, read N- to C-terminus: 22 kDa alpha-zein 14 (266 aa).

A signal peptide spans 1 to 21 (MATKILSLLALLALFASATNA).

The protein belongs to the zein family.

Functionally, zeins are major seed storage proteins. This Zea mays (Maize) protein is 22 kDa alpha-zein 14.